We begin with the raw amino-acid sequence, 321 residues long: Polyprenyl transferase cle5 (321 aa).

A run of 9 helical transmembrane segments spans residues 26–46 (PLLATFSGVWATILAGSHKIT), 57–77 (VLSQALLCFICSFVFCGAGMV), 107–127 (EALVWMAFQFISSWVLVSWML), 132–149 (VQAAMLPVTLSTILYPFA), 159–179 (IYPQYLLGFTLAYPSLIGTLA), 189–209 (LWASINQSLPMFVTVFTWTLY), 232–252 (VLAGSYIHHLLVVLAVLVLGA), 262–282 (SQWLWGGWMGVWTWSFLGQLV), and 300–320 (FALGVWTVFVCVVELLIGGNG).

This sequence belongs to the UbiA prenyltransferase family. Mg(2+) serves as cofactor.

The protein resides in the membrane. Its pathway is secondary metabolite biosynthesis; terpenoid biosynthesis. Functionally, polyprenyl transferase; part of the cluster A that mediates the biosynthesis of chevalone E and its oxidized derivatives that possess a unique five-membered lactone ring and can synergistically enhance the cytotoxicity of doxorubicin (DOX) in breast cancer cells. Within the pathway, cle5 takes part to the biosynthesis of the molecular scaffold by catalyzing the C-3 geranylgeranylation reaction of triacetic acid lactone (TAL) produced by cle1. The molecular scaffold is commonly biosynthesized by a series of enzymes including the non-reducing polyketide synthase (NR-PKS) cle1 that produces the alpha-pyrone triacetic acid lactone (TAL); The membrane-bound prenyltransferase cle5 that accepts TAL as its substrate to perform a C-3 geranylgeranylation reaction, in which the pathway-dedicated GGPS cle6 is required to provide GGPP, the other substrate of cle5; the FAD-dependent monooxygenase Cle3 that forms an (S)-epoxide ring at the terminal olefin of the geranylgeranyl group; and the terpene cyclase Cle7 that catalyzes the cyclization of the prenyl group that yields the pentacyclic pathway intermediate chevalone E. Chevalone E can derivatize into seven new oxidized analogs by the cytochrome P450 monooxygenases cle2 (acting at C-20) and cle4 (acting at C-11 and C-12). In Aspergillus versicolor, this protein is Polyprenyl transferase cle5.